The following is a 79-amino-acid chain: MKRARRAAPLPKKRRNMFAQLGIERVDYKDTSTLRQFLSERGKIRSRTVTGLTVQQQRQVTIAVKNAREMALLPYPGQG.

Belongs to the bacterial ribosomal protein bS18 family. As to quaternary structure, part of the 30S ribosomal subunit. Forms a tight heterodimer with protein bS6.

Functionally, binds as a heterodimer with protein bS6 to the central domain of the 16S rRNA, where it helps stabilize the platform of the 30S subunit. This is Small ribosomal subunit protein bS18B from Mycolicibacterium gilvum (strain PYR-GCK) (Mycobacterium gilvum (strain PYR-GCK)).